A 288-amino-acid chain; its full sequence is Bifunctional protein FolD (288 aa).

Residues 166 to 168 (GAS) and isoleucine 232 contribute to the NADP(+) site.

The protein belongs to the tetrahydrofolate dehydrogenase/cyclohydrolase family. Homodimer.

The enzyme catalyses (6R)-5,10-methylene-5,6,7,8-tetrahydrofolate + NADP(+) = (6R)-5,10-methenyltetrahydrofolate + NADPH. It carries out the reaction (6R)-5,10-methenyltetrahydrofolate + H2O = (6R)-10-formyltetrahydrofolate + H(+). It participates in one-carbon metabolism; tetrahydrofolate interconversion. Its function is as follows. Catalyzes the oxidation of 5,10-methylenetetrahydrofolate to 5,10-methenyltetrahydrofolate and then the hydrolysis of 5,10-methenyltetrahydrofolate to 10-formyltetrahydrofolate. This is Bifunctional protein FolD from Klebsiella pneumoniae (strain 342).